The sequence spans 178 residues: TM2 domain-containing protein biscotti (178 aa).

The signal sequence occupies residues 1–18 (MFPVLLLLLFFFAKETHQ). The Extracellular segment spans residues 19–99 (INVDCNELQM…YHLDTTLLLS (81 aa)). N-linked (GlcNAc...) asparagine glycosylation is found at asparagine 69 and asparagine 75. In terms of domain architecture, TM2 spans 94-137 (TTLLLSVFLGMFGVDRFYLGYPGIGLLKFCTLGGMFLGQLIDIV). Residues 100–120 (VFLGMFGVDRFYLGYPGIGLL) traverse the membrane as a helical segment. The Cytoplasmic segment spans residues 121–124 (KFCT). The helical transmembrane segment at 125-145 (LGGMFLGQLIDIVLIALQVVG) threads the bilayer. The Extracellular portion of the chain corresponds to 146–178 (PADGSAYVIPYYGAGIHIVRSDNTTYRLPRDDW). Residue asparagine 168 is glycosylated (N-linked (GlcNAc...) asparagine).

This sequence belongs to the TM2 family.

The protein resides in the membrane. Its function is as follows. Positive regulator of Notch signaling. Maternal neurogenic factor involved in Notch signaling-dependent neuroectodermal specification during early embryogenesis. Functions cooperatively with amx/TM2D3 and amrt/TM2D2. The sequence is that of TM2 domain-containing protein biscotti from Drosophila melanogaster (Fruit fly).